Reading from the N-terminus, the 168-residue chain is Crossover junction endodeoxyribonuclease RuvC (168 aa).

Residues D9, E70, and D145 contribute to the active site. Residues D9, E70, and D145 each coordinate Mg(2+).

Belongs to the RuvC family. Homodimer which binds Holliday junction (HJ) DNA. The HJ becomes 2-fold symmetrical on binding to RuvC with unstacked arms; it has a different conformation from HJ DNA in complex with RuvA. In the full resolvosome a probable DNA-RuvA(4)-RuvB(12)-RuvC(2) complex forms which resolves the HJ. Mg(2+) is required as a cofactor.

It is found in the cytoplasm. It catalyses the reaction Endonucleolytic cleavage at a junction such as a reciprocal single-stranded crossover between two homologous DNA duplexes (Holliday junction).. Its function is as follows. The RuvA-RuvB-RuvC complex processes Holliday junction (HJ) DNA during genetic recombination and DNA repair. Endonuclease that resolves HJ intermediates. Cleaves cruciform DNA by making single-stranded nicks across the HJ at symmetrical positions within the homologous arms, yielding a 5'-phosphate and a 3'-hydroxyl group; requires a central core of homology in the junction. The consensus cleavage sequence is 5'-(A/T)TT(C/G)-3'. Cleavage occurs on the 3'-side of the TT dinucleotide at the point of strand exchange. HJ branch migration catalyzed by RuvA-RuvB allows RuvC to scan DNA until it finds its consensus sequence, where it cleaves and resolves the cruciform DNA. The protein is Crossover junction endodeoxyribonuclease RuvC of Chlamydia caviae (strain ATCC VR-813 / DSM 19441 / 03DC25 / GPIC) (Chlamydophila caviae).